The sequence spans 256 residues: Hydroxyacylglutathione hydrolase (256 aa).

Zn(2+) contacts are provided by H55, H57, D59, H60, H113, D132, and H170.

The protein belongs to the metallo-beta-lactamase superfamily. Glyoxalase II family. As to quaternary structure, monomer. It depends on Zn(2+) as a cofactor.

It carries out the reaction an S-(2-hydroxyacyl)glutathione + H2O = a 2-hydroxy carboxylate + glutathione + H(+). Its pathway is secondary metabolite metabolism; methylglyoxal degradation; (R)-lactate from methylglyoxal: step 2/2. Thiolesterase that catalyzes the hydrolysis of S-D-lactoyl-glutathione to form glutathione and D-lactic acid. The polypeptide is Hydroxyacylglutathione hydrolase (Methylococcus capsulatus (strain ATCC 33009 / NCIMB 11132 / Bath)).